Here is a 426-residue protein sequence, read N- to C-terminus: Glutamate-1-semialdehyde 2,1-aminomutase (426 aa).

Residue Lys-263 is modified to N6-(pyridoxal phosphate)lysine.

It belongs to the class-III pyridoxal-phosphate-dependent aminotransferase family. HemL subfamily. As to quaternary structure, homodimer. Requires pyridoxal 5'-phosphate as cofactor.

It is found in the cytoplasm. The catalysed reaction is (S)-4-amino-5-oxopentanoate = 5-aminolevulinate. It functions in the pathway porphyrin-containing compound metabolism; protoporphyrin-IX biosynthesis; 5-aminolevulinate from L-glutamyl-tRNA(Glu): step 2/2. This chain is Glutamate-1-semialdehyde 2,1-aminomutase, found in Dichelobacter nodosus (strain VCS1703A).